The primary structure comprises 339 residues: Methylthioribose-1-phosphate isomerase (339 aa).

Residues 52–54 (RGA), R89, and Q188 contribute to the substrate site. D229 functions as the Proton donor in the catalytic mechanism. Residue 239–240 (NK) coordinates substrate.

It belongs to the eIF-2B alpha/beta/delta subunits family. MtnA subfamily.

The catalysed reaction is 5-(methylsulfanyl)-alpha-D-ribose 1-phosphate = 5-(methylsulfanyl)-D-ribulose 1-phosphate. Its pathway is amino-acid biosynthesis; L-methionine biosynthesis via salvage pathway; L-methionine from S-methyl-5-thio-alpha-D-ribose 1-phosphate: step 1/6. In terms of biological role, catalyzes the interconversion of methylthioribose-1-phosphate (MTR-1-P) into methylthioribulose-1-phosphate (MTRu-1-P). In Anaeromyxobacter dehalogenans (strain 2CP-C), this protein is Methylthioribose-1-phosphate isomerase.